A 613-amino-acid chain; its full sequence is Arginine--tRNA ligase (613 aa).

The short motif at 123–133 is the 'HIGH' region element; that stretch reads PNVAKPMHVGH.

The protein belongs to the class-I aminoacyl-tRNA synthetase family. In terms of assembly, monomer.

The protein localises to the cytoplasm. It catalyses the reaction tRNA(Arg) + L-arginine + ATP = L-arginyl-tRNA(Arg) + AMP + diphosphate. This is Arginine--tRNA ligase from Caulobacter sp. (strain K31).